The following is a 337-amino-acid chain: Structural protein VP9 (337 aa).

The protein localises to the virion. It is found in the host cytoplasm. The polypeptide is Structural protein VP9 (Colorado tick fever virus (strain USA/Florio N-7180) (CTFV)).